A 372-amino-acid chain; its full sequence is MNLSEIGYRRVVVKLGTSVLTSGSLKLDKAHMVELARQMACLMKAGVEVVLCTSGAIAAGKEHLGYPKLPDTIASKQLLAAVGQSQLILAWSQLFSIYGLHVGQLLLTRADLHDRERYLNARDSLNALLNNGIIPIINENDAVATAEIKVGDNDNLSARAALLCDADLLILLTDQKGLFDADPRKNPDAKLITEVQNIDDSLRMLAGGAVSGLGTGGMATKLEAADIARRAGVEVVIASGHYKDVIQNVVCKKPVGTHFTALEHPLESRKQWILAGPKARGQLVIDAGAIGAVTEKGRSLLSKGITEVKGLFQRGDTLELIDTKGKVYAKGMSRYSSADVTKLAGKHSDSIEEVLGYDYGDAVVHRNDMVVL.

Position 14 (Lys14) interacts with ATP. Substrate-binding residues include Ser54, Asp141, and Asn153. ATP is bound by residues 173 to 174 (TD) and 215 to 221 (TGGMATK). The PUA domain occupies 280-358 (RGQLVIDAGA…DSIEEVLGYD (79 aa)).

This sequence belongs to the glutamate 5-kinase family.

The protein localises to the cytoplasm. It catalyses the reaction L-glutamate + ATP = L-glutamyl 5-phosphate + ADP. Its pathway is amino-acid biosynthesis; L-proline biosynthesis; L-glutamate 5-semialdehyde from L-glutamate: step 1/2. Functionally, catalyzes the transfer of a phosphate group to glutamate to form L-glutamate 5-phosphate. This Shewanella pealeana (strain ATCC 700345 / ANG-SQ1) protein is Glutamate 5-kinase.